Consider the following 588-residue polypeptide: Intracellular maltogenic amylase (588 aa).

The Ca(2+) site is built by Asn149, Ser155, Gly174, and Asp176. His249 and Arg325 together coordinate substrate. The Nucleophile role is filled by Asp327. The active-site Proton donor is Glu356. Substrate contacts are provided by residues 422–423 (HD), Asp467, and Arg471.

This sequence belongs to the glycosyl hydrolase 13 family. BbmA subfamily. In terms of assembly, monomer or homodimer; in equilibrium. The cofactor is Ca(2+).

It is found in the cytoplasm. Hydrolyzes beta-cyclodextrin to maltose and glucose, soluble starch to maltose and glucose, and pullulan to panose with trace amounts of maltose and glucose. It is also able to hydrolyze acarbose. Can also exhibit a transglycosylation activity transferring glucose or maltose to another moiety of sugars by forming alpha-(1,6)- and alpha-(1,3)-glycosidic linkages upon the hydrolysis of substrate at concentrations of 5% or higher. In Bacillus subtilis, this protein is Intracellular maltogenic amylase (bbmA).